Here is a 722-residue protein sequence, read N- to C-terminus: G2-specific protein kinase fin1 (722 aa).

Positions 4-281 (YKILECIGHG…TYQLLRSPIL (278 aa)) constitute a Protein kinase domain. ATP contacts are provided by residues 10–18 (IGHGSFGRI) and K33. Catalysis depends on D151, which acts as the Proton acceptor. Positions 528 to 557 (LSVESDETAVSASSGESVPTDSTLTDTKSK) are disordered. The span at 535 to 546 (TAVSASSGESVP) shows a compositional bias: polar residues.

Belongs to the protein kinase superfamily. Ser/Thr protein kinase family. NIMA subfamily.

It is found in the cytoplasm. The protein localises to the cytoskeleton. It localises to the microtubule organizing center. Its subcellular location is the spindle pole body. The catalysed reaction is L-seryl-[protein] + ATP = O-phospho-L-seryl-[protein] + ADP + H(+). The enzyme catalyses L-threonyl-[protein] + ATP = O-phospho-L-threonyl-[protein] + ADP + H(+). Its function is as follows. Promotes chromosome condensation and nuclear envelope dynamics during mitosis. Activity appears at metaphase-anaphase transition. The chain is G2-specific protein kinase fin1 (fin1) from Schizosaccharomyces pombe (strain 972 / ATCC 24843) (Fission yeast).